The primary structure comprises 372 residues: Carbamoyl phosphate synthase small chain (372 aa).

Positions 1 to 186 are CPSase; that stretch reads MTYCKRGTEG…IHQNNSPDII (186 aa). Residues serine 52, glycine 233, and glycine 235 each contribute to the L-glutamine site. A Glutamine amidotransferase type-1 domain is found at 185–372; sequence IIVLVDCGIK…KKMVIKDEGN (188 aa). Residue cysteine 261 is the Nucleophile of the active site. L-glutamine is bound by residues leucine 262, glutamine 265, asparagine 303, glycine 305, and tyrosine 306. Catalysis depends on residues histidine 345 and glutamate 347.

This sequence belongs to the CarA family. As to quaternary structure, composed of two chains; the small (or glutamine) chain promotes the hydrolysis of glutamine to ammonia, which is used by the large (or ammonia) chain to synthesize carbamoyl phosphate. Tetramer of heterodimers (alpha,beta)4.

It carries out the reaction hydrogencarbonate + L-glutamine + 2 ATP + H2O = carbamoyl phosphate + L-glutamate + 2 ADP + phosphate + 2 H(+). The catalysed reaction is L-glutamine + H2O = L-glutamate + NH4(+). Its pathway is amino-acid biosynthesis; L-arginine biosynthesis; carbamoyl phosphate from bicarbonate: step 1/1. It participates in pyrimidine metabolism; UMP biosynthesis via de novo pathway; (S)-dihydroorotate from bicarbonate: step 1/3. In terms of biological role, small subunit of the glutamine-dependent carbamoyl phosphate synthetase (CPSase). CPSase catalyzes the formation of carbamoyl phosphate from the ammonia moiety of glutamine, carbonate, and phosphate donated by ATP, constituting the first step of 2 biosynthetic pathways, one leading to arginine and/or urea and the other to pyrimidine nucleotides. The small subunit (glutamine amidotransferase) binds and cleaves glutamine to supply the large subunit with the substrate ammonia. The chain is Carbamoyl phosphate synthase small chain from Metallosphaera sedula (strain ATCC 51363 / DSM 5348 / JCM 9185 / NBRC 15509 / TH2).